The following is a 319-amino-acid chain: Probable cytochrome c oxidase subunit 2 (319 aa).

A signal peptide spans 1 to 33; that stretch reads MSPNGSDRSPRRPMRRKLLQALTAGLVLATATG. Transmembrane regions (helical) follow at residues 63-83 and 101-121; these read WAAA…SVFF and LPIE…LFYF. Cu cation contacts are provided by His227, Cys262, Cys266, and His270.

Belongs to the cytochrome c oxidase subunit 2 family. Requires Cu cation as cofactor. Heme serves as cofactor.

Its subcellular location is the cell membrane. The enzyme catalyses 4 Fe(II)-[cytochrome c] + O2 + 8 H(+)(in) = 4 Fe(III)-[cytochrome c] + 2 H2O + 4 H(+)(out). Its function is as follows. Subunits I and II form the functional core of the enzyme complex. Electrons originating in cytochrome c are transferred via heme a and Cu(A) to the binuclear center formed by heme a3 and Cu(B). This Streptomyces coelicolor (strain ATCC BAA-471 / A3(2) / M145) protein is Probable cytochrome c oxidase subunit 2 (ctaC).